Reading from the N-terminus, the 254-residue chain is 3-deoxy-manno-octulosonate cytidylyltransferase (254 aa).

This sequence belongs to the KdsB family.

It is found in the cytoplasm. The enzyme catalyses 3-deoxy-alpha-D-manno-oct-2-ulosonate + CTP = CMP-3-deoxy-beta-D-manno-octulosonate + diphosphate. Its pathway is nucleotide-sugar biosynthesis; CMP-3-deoxy-D-manno-octulosonate biosynthesis; CMP-3-deoxy-D-manno-octulosonate from 3-deoxy-D-manno-octulosonate and CTP: step 1/1. It participates in bacterial outer membrane biogenesis; lipopolysaccharide biosynthesis. Functionally, activates KDO (a required 8-carbon sugar) for incorporation into bacterial lipopolysaccharide in Gram-negative bacteria. The chain is 3-deoxy-manno-octulosonate cytidylyltransferase from Bordetella bronchiseptica (strain ATCC BAA-588 / NCTC 13252 / RB50) (Alcaligenes bronchisepticus).